A 1573-amino-acid polypeptide reads, in one-letter code: Soluble scavenger receptor cysteine-rich domain-containing protein SSC5D (1573 aa).

A signal peptide spans 1–16 (MRVLACLLAALVGIQA). The region spanning 20–120 (LRLADGPHGC…HEEDAGVVCA (101 aa)) is the SRCR 1 domain. Disulfide bonds link Cys45–Cys109, Cys58–Cys119, and Cys89–Cys99. The tract at residues 153-192 (EPLVTHAPRPAGNPQNASRKKSPRPKQAKSTRAPLLTTGA) is disordered. Asn168 is a glycosylation site (N-linked (GlcNAc...) asparagine). Positions 170-181 (SRKKSPRPKQAK) are enriched in basic residues. 2 SRCR domains span residues 198 to 298 (LRLV…LVCT) and 304 to 404 (LRLA…AVCD). 6 disulfide bridges follow: Cys223-Cys287, Cys236-Cys297, Cys267-Cys277, Cys329-Cys393, Cys342-Cys403, and Cys373-Cys383. N-linked (GlcNAc...) asparagine glycosylation is found at Asn376 and Asn420. The interval 412–465 (PPTAPTDSNNSTPREAASRPPSTMTSQAPGTAGVSPPPASPTVLWEPGPEAGSP) is disordered. Positions 431-440 (PPSTMTSQAP) are enriched in polar residues. The SRCR 4 domain occupies 467-568 (LRLVAGPSKC…HNEDVGVTCT (102 aa)). Intrachain disulfides connect Cys492–Cys557, Cys505–Cys567, and Cys537–Cys547. The tract at residues 614–769 (EKTTTKAPGK…SVSTTGESGL (156 aa)) is disordered. Positions 626-637 (KSTKKWVTKNAK) are enriched in basic residues. Over residues 654–671 (AQSPPDLTSQTTAALTTE) the composition is skewed to polar residues. Residues 672–685 (ASRRPTSEFTRRPT) are compositionally biased toward basic and acidic residues. Composition is skewed to polar residues over residues 687–702 (EAPQRWTSHTTATLTP) and 711–735 (KTMAMLTTQGPQEMTSESTIKSIPQ). The SRCR 5 domain maps to 772-872 (VRLADGPNRC…HEEDVGLTCT (101 aa)). 3 cysteine pairs are disulfide-bonded: Cys797–Cys861, Cys810–Cys871, and Cys841–Cys851. Disordered stretches follow at residues 895–1475 (KGTT…PCVA) and 1554–1573 (MPAPTTTTPEEEERPLRGDV). The span at 924–934 (RLPDTGSKDGY) shows a compositional bias: basic and acidic residues. Pro residues-rich tracts occupy residues 1004–1020 (PPTPSPGPSASPGPPGP) and 1083–1093 (TPEPSPTPLPT). A compositionally biased stretch (polar residues) spans 1101 to 1140 (DPSTPSEVTSLSPTSEQVPESDTTPDLDTTPYSSTVSEYS). The segment covering 1144–1160 (DPSPSPHPTTTPDPTMA) has biased composition (pro residues). Low complexity-rich tracts occupy residues 1161-1175 (PDPITTLNPTVTPHF) and 1185-1277 (PHPT…MPHP). A compositionally biased stretch (pro residues) spans 1278 to 1328 (TTTPHPTTTPHPTTTPHPTTTPHPTMTPDPTTTPYPTTTPDPTTTPHPTTP). 2 stretches are compositionally biased toward polar residues: residues 1335–1354 (VITTVSLPTSLGTELSSPTL) and 1364–1380 (PQLTFTAPAPHTSTSQI). Low complexity predominate over residues 1381–1401 (PTLEPSPALESSPSRSSTATS). Residues 1464–1475 (GQSPGPHGPCVA) are compositionally biased toward pro residues.

In terms of assembly, interacts with LGALS1 and laminin. As to expression, highly expressed in monocytes/macrophages and T-lymphocytes. Highly expressed in placenta and spleen, and also detected at lower levels in colon, and more weakly in lung, heart and kidney.

Its subcellular location is the secreted. It localises to the cytoplasm. Its function is as follows. Binds to extracellular matrix proteins. Binds to pathogen-associated molecular patterns (PAMPs) present on the cell walls of Gram-positive and Gram-negative bacteria and fungi, behaving as a pattern recognition receptor (PRR). Induces bacterial and fungal aggregation and subsequent inhibition of PAMP-induced cytokine release. Does not possess intrinsic bactericidal activity. May play a role in the innate defense and homeostasis of certain epithelial surfaces. This is Soluble scavenger receptor cysteine-rich domain-containing protein SSC5D (SSC5D) from Homo sapiens (Human).